The chain runs to 239 residues: RING finger protein 151 (239 aa).

Residues 20–58 (CSVCHGVLKRPTRLPCSHIFCKKCIFRWLARQNTCPCCR) form an RING-type zinc finger. The TRAF-type zinc-finger motif lies at 101–156 (EHQDSCPFELMACPNEGCTVQVLRGVLDEHRQHCQQNGQQRCPLGCGSTLAALEGE).

Interacts with DTNBP1. As to expression, expressed in testis. Expressed in round spermatids of the stages VII-VIII semniniferous tubules. Expressed in elongating spermatids of stages VIII-IX seminiferous tubules (at protein level).

It is found in the cytoplasm. The protein localises to the nucleus. May be involved in acrosome formation of spermatids. In Mus musculus (Mouse), this protein is RING finger protein 151 (Rnf151).